We begin with the raw amino-acid sequence, 501 residues long: UDP-N-acetylmuramoyl-L-alanyl-D-glutamate--2,6-diaminopimelate ligase (501 aa).

UDP-N-acetyl-alpha-D-muramoyl-L-alanyl-D-glutamate is bound at residue Ser-29. 112-118 lines the ATP pocket; sequence GTNGKTS. Residues 161–162, Ser-188, and Arg-196 each bind UDP-N-acetyl-alpha-D-muramoyl-L-alanyl-D-glutamate; that span reads TT. Position 228 is an N6-carboxylysine (Lys-228). Meso-2,6-diaminopimelate contacts are provided by residues Arg-393, 417–420, Gly-468, and Glu-472; that span reads DNPR. The short motif at 417–420 is the Meso-diaminopimelate recognition motif element; sequence DNPR.

It belongs to the MurCDEF family. MurE subfamily. It depends on Mg(2+) as a cofactor. Carboxylation is probably crucial for Mg(2+) binding and, consequently, for the gamma-phosphate positioning of ATP.

Its subcellular location is the cytoplasm. The enzyme catalyses UDP-N-acetyl-alpha-D-muramoyl-L-alanyl-D-glutamate + meso-2,6-diaminopimelate + ATP = UDP-N-acetyl-alpha-D-muramoyl-L-alanyl-gamma-D-glutamyl-meso-2,6-diaminopimelate + ADP + phosphate + H(+). The protein operates within cell wall biogenesis; peptidoglycan biosynthesis. Functionally, catalyzes the addition of meso-diaminopimelic acid to the nucleotide precursor UDP-N-acetylmuramoyl-L-alanyl-D-glutamate (UMAG) in the biosynthesis of bacterial cell-wall peptidoglycan. The sequence is that of UDP-N-acetylmuramoyl-L-alanyl-D-glutamate--2,6-diaminopimelate ligase from Acidovorax sp. (strain JS42).